A 351-amino-acid chain; its full sequence is Putative F-box protein At4g09790 (351 aa).

One can recognise an F-box domain in the interval Met-1–Ala-51.

The chain is Putative F-box protein At4g09790 from Arabidopsis thaliana (Mouse-ear cress).